The chain runs to 232 residues: Large ribosomal subunit protein uL1 (232 aa).

This sequence belongs to the universal ribosomal protein uL1 family. In terms of assembly, part of the 50S ribosomal subunit.

Its function is as follows. Binds directly to 23S rRNA. The L1 stalk is quite mobile in the ribosome, and is involved in E site tRNA release. Functionally, protein L1 is also a translational repressor protein, it controls the translation of the L11 operon by binding to its mRNA. The chain is Large ribosomal subunit protein uL1 from Cereibacter sphaeroides (strain ATCC 17029 / ATH 2.4.9) (Rhodobacter sphaeroides).